The following is a 505-amino-acid chain: Probable RNA exonuclease NGL3 (505 aa).

Disordered stretches follow at residues 1–75 and 334–369; these read MDSQ…FPTP and RNGE…SFTA. The segment covering 10-23 has biased composition (polar residues); the sequence is SPSQKESSSTSGLV. The segment covering 36–54 has biased composition (basic and acidic residues); sequence HRDQLSVDQIKKIREERAQ. A Phosphoserine modification is found at Ser62. The span at 338–347 shows a compositional bias: acidic residues; that stretch reads ESDQDDEECD.

It belongs to the CCR4/nocturin family.

The chain is Probable RNA exonuclease NGL3 (NGL3) from Saccharomyces cerevisiae (strain ATCC 204508 / S288c) (Baker's yeast).